Consider the following 335-residue polypeptide: 4-hydroxythreonine-4-phosphate dehydrogenase (335 aa).

Residues His-135 and Thr-136 each contribute to the substrate site. 3 residues coordinate a divalent metal cation: His-165, His-210, and His-265. Lys-273, Asn-282, and Arg-291 together coordinate substrate.

This sequence belongs to the PdxA family. As to quaternary structure, homodimer. The cofactor is Zn(2+). Mg(2+) is required as a cofactor. It depends on Co(2+) as a cofactor.

It is found in the cytoplasm. The enzyme catalyses 4-(phosphooxy)-L-threonine + NAD(+) = 3-amino-2-oxopropyl phosphate + CO2 + NADH. It participates in cofactor biosynthesis; pyridoxine 5'-phosphate biosynthesis; pyridoxine 5'-phosphate from D-erythrose 4-phosphate: step 4/5. In terms of biological role, catalyzes the NAD(P)-dependent oxidation of 4-(phosphooxy)-L-threonine (HTP) into 2-amino-3-oxo-4-(phosphooxy)butyric acid which spontaneously decarboxylates to form 3-amino-2-oxopropyl phosphate (AHAP). This chain is 4-hydroxythreonine-4-phosphate dehydrogenase, found in Saccharophagus degradans (strain 2-40 / ATCC 43961 / DSM 17024).